Reading from the N-terminus, the 122-residue chain is Large ribosomal subunit protein uL14c (122 aa).

Belongs to the universal ribosomal protein uL14 family. As to quaternary structure, part of the 50S ribosomal subunit.

It localises to the plastid. The protein localises to the cyanelle. Functionally, binds to 23S rRNA. The chain is Large ribosomal subunit protein uL14c from Cyanophora paradoxa.